A 631-amino-acid polypeptide reads, in one-letter code: ATP-dependent protease PrkA (631 aa).

At Thr217 the chain carries Phosphothreonine. Residue Ser219 is modified to Phosphoserine.

The protein belongs to the PrkA family. Phosphorylated by PrkC on two sites, Thr-217 and Ser-219, with the threonine being the major site of modification.

The protein resides in the forespore. It localises to the spore coat. It carries out the reaction Hydrolysis of proteins in presence of ATP.. Its activity is regulated as follows. Hydrolase activity is regulated by phosphorylation by the Ser/Thr kinase PrkC, probably allowing fine control of sporulation. Phosphorylation by PrkC does not prevent ATP fixation but it inhibits specifically PrkA protease activity and down-regulates the sporulation processes. Hydrolase activity is inhibited by a protease inhibitor, phenylmethylsulfonyl fluoride (PMSF). Potential kinase activity requires the presence of MgCl(2) and is inhibited in the presence of MnCl(2). Its function is as follows. ATP-dependent protease that regulates sporulation. Is able to bind and hydrolyze ATP. This ATP-dependent protease activity is necessary for efficient sporulation of B.subtilis. In vitro, can hydrolyze alpha-casein, an exogenous substrate of Lon proteases, in an ATP-dependent manner. PrkA also modulates sporulation by negatively regulating the transcriptional regulator Hpr/ScoC to induce the expression of sigK. The control of sporulation mediated via the Hpr/ScoC regulator is probably indirect. PrkA was originally thought to be a protein kinase, as it has been shown to phosphorylate in vitro an unidentified 60 kDa protein from B.subtilis crude extracts at a serine residue. However, Zhang et al. did not observe autophosphorylation or kinase activity for this protein, suggesting that it may have lost its kinase activity during evolution or may be a pseudokinase. In Bacillus subtilis (strain 168), this protein is ATP-dependent protease PrkA.